The primary structure comprises 158 residues: Transcriptional repressor NrdR (158 aa).

A zinc finger spans residues 3–34 (CPFCSFPESRVLDSRPADEGNSIRRRRECGEC). In terms of domain architecture, ATP-cone spans 49-139 (LVVVKKDGRR…VYRQFGDIYS (91 aa)).

Belongs to the NrdR family. Requires Zn(2+) as cofactor.

Negatively regulates transcription of bacterial ribonucleotide reductase nrd genes and operons by binding to NrdR-boxes. The protein is Transcriptional repressor NrdR of Desulforamulus reducens (strain ATCC BAA-1160 / DSM 100696 / MI-1) (Desulfotomaculum reducens).